A 709-amino-acid polypeptide reads, in one-letter code: ATP-binding cassette sub-family F member 3 (709 aa).

A2 carries the post-translational modification N-acetylalanine. S83 carries the post-translational modification Phosphoserine. Residues 129 to 143 (RLKAKQEKRSEKDTL) are compositionally biased toward basic and acidic residues. Residues 129–171 (RLKAKQEKRSEKDTLKTSNPLVLEEASASQAGSRKESRLESSG) are disordered. A phosphoserine mark is found at S155, S157, and S161. Residues 161 to 171 (SRKESRLESSG) show a composition bias toward basic and acidic residues. ABC transporter domains follow at residues 178–424 (VRIE…LNQQ) and 492–707 (LQLD…RREG). Residue 210–217 (GRNGLGKT) participates in ATP binding. S283 is subject to Phosphoserine. 525–532 (GENGAGKS) lines the ATP pocket.

Belongs to the ABC transporter superfamily. ABCF family. EF3 subfamily.

Displays an antiviral effect against flaviviruses in the presence of OAS1B. This Pongo abelii (Sumatran orangutan) protein is ATP-binding cassette sub-family F member 3 (ABCF3).